The following is a 140-amino-acid chain: MYTKEYYWFSQYMIITSTLVLTIIWSILPSSLGEAAPKQFINTLLDIFPQRRWIITLESIMLMGMLCTYIGLLMYNEDTLTPPLDSLSTVTDAGGQLVIEDDPDVFVKKWAFKETSGIYDLSLMDACQLLYLYDNDHTST.

Residues Met1–Tyr12 are Cytoplasmic-facing. A helical transmembrane segment spans residues Met13–Gly33. Over Glu34–Arg52 the chain is Lumenal. A helical transmembrane segment spans residues Trp53–Leu73. Topologically, residues Met74–Thr140 are cytoplasmic.

Belongs to the GPI19 family. In terms of assembly, component of the phosphatidylinositol N-acetylglucosaminyltransferase (GPI-GlcNAc transferase) complex composed of at least GPI1, GPI2, GPI3, GPI15, GPI19 and ERI1. Interacts with GPI2.

Its subcellular location is the endoplasmic reticulum membrane. It catalyses the reaction a 1,2-diacyl-sn-glycero-3-phospho-(1D-myo-inositol) + UDP-N-acetyl-alpha-D-glucosamine = a 6-(N-acetyl-alpha-D-glucosaminyl)-1-(1,2-diacyl-sn-glycero-3-phospho)-1D-myo-inositol + UDP + H(+). It functions in the pathway glycolipid biosynthesis; glycosylphosphatidylinositol-anchor biosynthesis. In terms of biological role, part of the complex catalyzing the transfer of N-acetylglucosamine from UDP-N-acetylglucosamine to phosphatidylinositol, the first step of GPI biosynthesis. Involved in cell wall biosynthesis. The sequence is that of Phosphatidylinositol N-acetylglucosaminyltransferase subunit GPI19 (GPI19) from Saccharomyces cerevisiae (strain ATCC 204508 / S288c) (Baker's yeast).